Consider the following 365-residue polypeptide: NAD(P)H-quinone oxidoreductase subunit 1, chloroplastic (365 aa).

A run of 6 helical transmembrane segments spans residues 30–50 (LVPI…IVWL), 104–124 (IAVI…HFVL), 129–149 (IGVF…LMSG), 253–273 (FGLF…FVAV), 302–322 (VFGT…FLFI), and 338–358 (LLNL…LLTT).

Belongs to the complex I subunit 1 family. NDH is composed of at least 16 different subunits, 5 of which are encoded in the nucleus.

It is found in the plastid. The protein localises to the chloroplast thylakoid membrane. The catalysed reaction is a plastoquinone + NADH + (n+1) H(+)(in) = a plastoquinol + NAD(+) + n H(+)(out). It catalyses the reaction a plastoquinone + NADPH + (n+1) H(+)(in) = a plastoquinol + NADP(+) + n H(+)(out). Functionally, NDH shuttles electrons from NAD(P)H:plastoquinone, via FMN and iron-sulfur (Fe-S) centers, to quinones in the photosynthetic chain and possibly in a chloroplast respiratory chain. The immediate electron acceptor for the enzyme in this species is believed to be plastoquinone. Couples the redox reaction to proton translocation, and thus conserves the redox energy in a proton gradient. This is NAD(P)H-quinone oxidoreductase subunit 1, chloroplastic from Populus trichocarpa (Western balsam poplar).